We begin with the raw amino-acid sequence, 135 residues long: Protein Wnt-7c (135 aa).

Intrachain disulfides connect Cys-3–Cys-17 and Cys-5–Cys-12. A lipid anchor (O-palmitoleoyl serine; by PORCN) is attached at Ser-9. Residues Asn-62, Asn-85, and Asn-98 are each glycosylated (N-linked (GlcNAc...) asparagine). 3 disulfide bridges follow: Cys-81–Cys-112, Cys-97–Cys-107, and Cys-134–Cys-135.

Belongs to the Wnt family. Palmitoleoylation is required for efficient binding to frizzled receptors. Depalmitoleoylation leads to Wnt signaling pathway inhibition.

The protein resides in the secreted. It localises to the extracellular space. Its subcellular location is the extracellular matrix. Ligand for members of the frizzled family of seven transmembrane receptors. Probable developmental protein. May be a signaling molecule which affects the development of discrete regions of tissues. Is likely to signal over only few cell diameters. This chain is Protein Wnt-7c (wnt7c), found in Xenopus laevis (African clawed frog).